The sequence spans 258 residues: MLAKRIIPCLDVRDGQVVKGVQFRNHEIIGDIVPLAKRYAEEGADELVFYDITASSDGRVVDKSWVTRVAEVIDIPFCVAGGIKTLEDAAQILSFGADKISVNSPALADPTLITRLADRFGVQCIVVGIDTWFDEETGKYHVNQYTGDESRTRVTQWETLDWVREVQQRGAGEIVLNMMNQDGVRNGYDLVQLKKVREACRVPLIASGGAGTMEHFLDAFREANVDGALAASVFHKQIINIGELKAFLAQQGVEIRVC.

Residues Asp11 and Asp130 contribute to the active site.

The protein belongs to the HisA/HisF family. As to quaternary structure, heterodimer of HisH and HisF.

The protein resides in the cytoplasm. The catalysed reaction is 5-[(5-phospho-1-deoxy-D-ribulos-1-ylimino)methylamino]-1-(5-phospho-beta-D-ribosyl)imidazole-4-carboxamide + L-glutamine = D-erythro-1-(imidazol-4-yl)glycerol 3-phosphate + 5-amino-1-(5-phospho-beta-D-ribosyl)imidazole-4-carboxamide + L-glutamate + H(+). It functions in the pathway amino-acid biosynthesis; L-histidine biosynthesis; L-histidine from 5-phospho-alpha-D-ribose 1-diphosphate: step 5/9. Its function is as follows. IGPS catalyzes the conversion of PRFAR and glutamine to IGP, AICAR and glutamate. The HisF subunit catalyzes the cyclization activity that produces IGP and AICAR from PRFAR using the ammonia provided by the HisH subunit. This chain is Imidazole glycerol phosphate synthase subunit HisF, found in Cronobacter sakazakii (strain ATCC BAA-894) (Enterobacter sakazakii).